We begin with the raw amino-acid sequence, 417 residues long: Serine hydroxymethyltransferase 1 (417 aa).

Residues Leu-121 and 125–127 each bind (6S)-5,6,7,8-tetrahydrofolate; that span reads GHL. Residue Lys-229 is modified to N6-(pyridoxal phosphate)lysine. Residue 354–356 participates in (6S)-5,6,7,8-tetrahydrofolate binding; sequence SPF.

It belongs to the SHMT family. As to quaternary structure, homodimer. The cofactor is pyridoxal 5'-phosphate.

The protein resides in the cytoplasm. It carries out the reaction (6R)-5,10-methylene-5,6,7,8-tetrahydrofolate + glycine + H2O = (6S)-5,6,7,8-tetrahydrofolate + L-serine. It functions in the pathway one-carbon metabolism; tetrahydrofolate interconversion. The protein operates within amino-acid biosynthesis; glycine biosynthesis; glycine from L-serine: step 1/1. Catalyzes the reversible interconversion of serine and glycine with tetrahydrofolate (THF) serving as the one-carbon carrier. This reaction serves as the major source of one-carbon groups required for the biosynthesis of purines, thymidylate, methionine, and other important biomolecules. Also exhibits THF-independent aldolase activity toward beta-hydroxyamino acids, producing glycine and aldehydes, via a retro-aldol mechanism. The protein is Serine hydroxymethyltransferase 1 of Pseudomonas savastanoi pv. phaseolicola (strain 1448A / Race 6) (Pseudomonas syringae pv. phaseolicola (strain 1448A / Race 6)).